The chain runs to 282 residues: Bifunctional protein FolD (282 aa).

NADP(+)-binding positions include 166–168 and Ile232; that span reads GAS.

This sequence belongs to the tetrahydrofolate dehydrogenase/cyclohydrolase family. In terms of assembly, homodimer.

It carries out the reaction (6R)-5,10-methylene-5,6,7,8-tetrahydrofolate + NADP(+) = (6R)-5,10-methenyltetrahydrofolate + NADPH. It catalyses the reaction (6R)-5,10-methenyltetrahydrofolate + H2O = (6R)-10-formyltetrahydrofolate + H(+). It functions in the pathway one-carbon metabolism; tetrahydrofolate interconversion. In terms of biological role, catalyzes the oxidation of 5,10-methylenetetrahydrofolate to 5,10-methenyltetrahydrofolate and then the hydrolysis of 5,10-methenyltetrahydrofolate to 10-formyltetrahydrofolate. The sequence is that of Bifunctional protein FolD from Haemophilus influenzae (strain PittGG).